The following is a 517-amino-acid chain: E3 ubiquitin-protein ligase TRIM65 (517 aa).

At A2 the chain carries N-acetylalanine. Residues 12 to 51 (CAICLGLYQDPVTLPCGHNFCGACIRDWWDRCGKACPECR) form an RING-type zinc finger. The interval 75–94 (AGPARDPGPDPGPGPDPAAR) is disordered. A B box-type zinc finger spans residues 90-137 (DPAARCPRHGRPLELFCRTEGRCVCSVCTVRECRLHERALLDAERLKR). Zn(2+)-binding residues include C95, H98, C117, and H125. A coiled-coil region spans residues 139–227 (AQLRASLEVT…QRLRVHLEAV (89 aa)). S185 carries the phosphoserine modification. K206 is covalently cross-linked ((Microbial infection) Glycyl lysine isopeptide (Lys-Gly) (interchain with G-Cter in ubiquitin)). The region spanning 313–506 (APVPSTVCPL…LTLCHQPGAV (194 aa)) is the B30.2/SPRY domain.

This sequence belongs to the TRIM/RBCC family. Homo-multimerizes. Interacts with ARRDC4.

It is found in the cytoplasm. It catalyses the reaction S-ubiquitinyl-[E2 ubiquitin-conjugating enzyme]-L-cysteine + [acceptor protein]-L-lysine = [E2 ubiquitin-conjugating enzyme]-L-cysteine + N(6)-ubiquitinyl-[acceptor protein]-L-lysine.. Its pathway is protein modification; protein ubiquitination. In terms of biological role, E3 ubiquitin ligase that plays a role in several processes including innate immnity, autophagy or inflammation. Negatively regulates miRNAs by modulating the ubiquitination and stability of TNRC6A, a protein involved in RNA-mediated gene silencing by both micro-RNAs (miRNAs) and short interfering RNAs. This ubiquitination results in the suppressed expression of miR-138-5p leading to increased autophagy. Upon enteroviral infection, promotes 'Lys-63'-mediated ubiquitination activation of IFIH1/MDA5 leading to innate signaling cascade. Mechanistically, selectively recognizes MDA5 filaments that occur on dsRNAs. Plays also a role in limitation of inflammation through different mechanisms. First, promotes 'Lys-48'-mediated ubiquitination of VCAM1 leading to its degradation and limitation of LPS-induced lung inflammation. In addition, negatively regulates inflammasome activation by promoting 'lys48'-linked ubiquitination of NLRP3 which is critical for the inhibition of NLRP3 inflammasome activation in resting macrophages. This Homo sapiens (Human) protein is E3 ubiquitin-protein ligase TRIM65 (TRIM65).